Here is a 441-residue protein sequence, read N- to C-terminus: Nuclear distribution protein nudF (441 aa).

In terms of domain architecture, LisH spans 9 to 41 (QAEELHKSIIAYLASVNLTESSAALRAELGDSV). 8 WD repeats span residues 87–128 (GHRE…RTVK), 130–170 (HTKA…KNIR), 174–221 (GHDH…CVKT), 224–263 (GHVD…TKST), 266–326 (GHEH…IKTL), 328–367 (GHDN…KCVR), 372–402 (AHGH…NGAP), and 403–440 (AATA…RIFA). The tract at residues 390–415 (GGANGESETNGAPAATATTNGVRPDP) is disordered. The span at 398–410 (TNGAPAATATTNG) shows a compositional bias: low complexity.

The protein belongs to the WD repeat LIS1/nudF family. In terms of assembly, self-associates. Interacts with nudE and dynein.

The protein resides in the cytoplasm. Its subcellular location is the cytoskeleton. The protein localises to the spindle pole. Its function is as follows. Positively regulates the activity of the minus-end directed microtubule motor protein dynein. May enhance dynein-mediated microtubule sliding by targeting dynein to the microtubule plus end. Required for nuclear migration during vegetative growth as well as development. Required for retrograde early endosome (EE) transport from the hyphal tip. Required for localization of dynein to the mitotic spindle poles. Recruits additional proteins to the dynein complex at SPBs. This Neosartorya fischeri (strain ATCC 1020 / DSM 3700 / CBS 544.65 / FGSC A1164 / JCM 1740 / NRRL 181 / WB 181) (Aspergillus fischerianus) protein is Nuclear distribution protein nudF.